A 400-amino-acid polypeptide reads, in one-letter code: Enoyl-[acyl-carrier-protein] reductase [NADH] (400 aa).

NAD(+) contacts are provided by residues 48–53 (GSSSGY), 74–75 (FE), 111–112 (DA), and 139–140 (LA). Tyrosine 225 contributes to the substrate binding site. Catalysis depends on tyrosine 235, which acts as the Proton donor. NAD(+) is bound by residues lysine 244 and 273 to 275 (VVT).

Belongs to the TER reductase family. In terms of assembly, monomer.

The enzyme catalyses a 2,3-saturated acyl-[ACP] + NAD(+) = a (2E)-enoyl-[ACP] + NADH + H(+). The protein operates within lipid metabolism; fatty acid biosynthesis. Functionally, involved in the final reduction of the elongation cycle of fatty acid synthesis (FAS II). Catalyzes the reduction of a carbon-carbon double bond in an enoyl moiety that is covalently linked to an acyl carrier protein (ACP). This Shewanella baltica (strain OS223) protein is Enoyl-[acyl-carrier-protein] reductase [NADH].